We begin with the raw amino-acid sequence, 204 residues long: LexA repressor (204 aa).

Positions 29-49 (RAEIADIMGFQSKNAASDHLR) form a DNA-binding region, H-T-H motif. Residues serine 123 and lysine 160 each act as for autocatalytic cleavage activity in the active site.

This sequence belongs to the peptidase S24 family. As to quaternary structure, homodimer.

The catalysed reaction is Hydrolysis of Ala-|-Gly bond in repressor LexA.. Represses a number of genes involved in the response to DNA damage (SOS response), including recA and lexA. In the presence of single-stranded DNA, RecA interacts with LexA causing an autocatalytic cleavage which disrupts the DNA-binding part of LexA, leading to derepression of the SOS regulon and eventually DNA repair. The sequence is that of LexA repressor from Alcanivorax borkumensis (strain ATCC 700651 / DSM 11573 / NCIMB 13689 / SK2).